The following is a 616-amino-acid chain: Sulfite reductase [NADPH] hemoprotein beta-component (616 aa).

Residues 1–10 are compositionally biased toward basic and acidic residues; that stretch reads MDDHSPRDAA. Residues 1 to 35 form a disordered region; that stretch reads MDDHSPRDAAETPAPGPAATPAKRVYETPPTSRPI. Over residues 11–22 the composition is skewed to low complexity; that stretch reads ETPAPGPAATPA. 4 residues coordinate [4Fe-4S] cluster: cysteine 470, cysteine 476, cysteine 515, and cysteine 519. Cysteine 519 lines the siroheme pocket.

This sequence belongs to the nitrite and sulfite reductase 4Fe-4S domain family. In terms of assembly, alpha(8)-beta(8). The alpha component is a flavoprotein, the beta component is a hemoprotein. The cofactor is siroheme. It depends on [4Fe-4S] cluster as a cofactor.

It catalyses the reaction hydrogen sulfide + 3 NADP(+) + 3 H2O = sulfite + 3 NADPH + 4 H(+). Its pathway is sulfur metabolism; hydrogen sulfide biosynthesis; hydrogen sulfide from sulfite (NADPH route): step 1/1. Component of the sulfite reductase complex that catalyzes the 6-electron reduction of sulfite to sulfide. This is one of several activities required for the biosynthesis of L-cysteine from sulfate. The polypeptide is Sulfite reductase [NADPH] hemoprotein beta-component (Methylobacterium radiotolerans (strain ATCC 27329 / DSM 1819 / JCM 2831 / NBRC 15690 / NCIMB 10815 / 0-1)).